The sequence spans 92 residues: Signal recognition particle 19 kDa protein (92 aa).

The protein belongs to the SRP19 family. As to quaternary structure, part of the signal recognition particle protein translocation system, which is composed of SRP and FtsY. Archaeal SRP consists of a 7S RNA molecule of 300 nucleotides and two protein subunits: SRP54 and SRP19.

Its subcellular location is the cytoplasm. Functionally, involved in targeting and insertion of nascent membrane proteins into the cytoplasmic membrane. Binds directly to 7S RNA and mediates binding of the 54 kDa subunit of the SRP. The sequence is that of Signal recognition particle 19 kDa protein from Haloarcula marismortui (strain ATCC 43049 / DSM 3752 / JCM 8966 / VKM B-1809) (Halobacterium marismortui).